Here is a 419-residue protein sequence, read N- to C-terminus: Transcription termination factor Rho (419 aa).

A Rho RNA-BD domain is found at 48–123; the sequence is DIFGDGVLEI…LKVNEVNYDK (76 aa). 3 RNA-binding regions span residues 61–66, 78–80, and 108–110; these read GFGFLR, DIY, and ERY. ATP-binding positions include 169-174, 181-186, and arginine 212; these read GRGQRG and KAGKTI. The RNA-binding 2 stretch occupies residues 284–288; sequence VLTGG.

Belongs to the Rho family. In terms of assembly, homohexamer. The homohexamer assembles into an open ring structure.

Facilitates transcription termination by a mechanism that involves Rho binding to the nascent RNA, activation of Rho's RNA-dependent ATPase activity, and release of the mRNA from the DNA template. The protein is Transcription termination factor Rho of Buchnera aphidicola subsp. Acyrthosiphon pisum (strain APS) (Acyrthosiphon pisum symbiotic bacterium).